A 207-amino-acid polypeptide reads, in one-letter code: MPKVQVVNMQGSPVGELELDEYVFGIEPNTHVMHQAVVGQLASQRRGTHSTLLRGEVRGGGRKPWRQKGTGRARAGSIRSPLWRGGAVLFGPKPRKYGFSLPKKVRRLALRSALSSKVNEQKLIVLEDLSLNEAKTREMVKVLQALNVGKKALIVTDEFMETIDRSARNIAGIKTTAVEGMNIYDLLNSDVIVMTKAAVTKTEEVLA.

A disordered region spans residues 56–76 (EVRGGGRKPWRQKGTGRARAG). A compositionally biased stretch (basic residues) spans 60 to 71 (GGRKPWRQKGTG).

This sequence belongs to the universal ribosomal protein uL4 family. As to quaternary structure, part of the 50S ribosomal subunit.

One of the primary rRNA binding proteins, this protein initially binds near the 5'-end of the 23S rRNA. It is important during the early stages of 50S assembly. It makes multiple contacts with different domains of the 23S rRNA in the assembled 50S subunit and ribosome. Functionally, forms part of the polypeptide exit tunnel. This chain is Large ribosomal subunit protein uL4, found in Desulfitobacterium hafniense (strain DSM 10664 / DCB-2).